Here is a 642-residue protein sequence, read N- to C-terminus: Threonine--tRNA ligase (642 aa).

The TGS domain maps to 1–61 (MPVITLPDGS…ENDATLAIIT (61 aa)). Residues 243–534 (DHRKIGKQLD…LTEEFAGFFP (292 aa)) are catalytic. Residues Cys334, His385, and His511 each coordinate Zn(2+).

The protein belongs to the class-II aminoacyl-tRNA synthetase family. In terms of assembly, homodimer. Zn(2+) is required as a cofactor.

It is found in the cytoplasm. The enzyme catalyses tRNA(Thr) + L-threonine + ATP = L-threonyl-tRNA(Thr) + AMP + diphosphate + H(+). Its function is as follows. Catalyzes the attachment of threonine to tRNA(Thr) in a two-step reaction: L-threonine is first activated by ATP to form Thr-AMP and then transferred to the acceptor end of tRNA(Thr). Also edits incorrectly charged L-seryl-tRNA(Thr). The protein is Threonine--tRNA ligase of Salmonella choleraesuis (strain SC-B67).